The chain runs to 224 residues: Peptidyl-prolyl cis-trans isomerase FKBP3 (224 aa).

Position 2 is an N-acetylalanine (Ala2). Ser36 is subject to Phosphoserine. The disordered stretch occupies residues 87–119 (NVKLNEDKPKETKSEETPDEGPPKYTKSVLKKG). Over residues 89 to 102 (KLNEDKPKETKSEE) the composition is skewed to basic and acidic residues. Lys99 is subject to N6-acetyllysine. The PPIase FKBP-type domain maps to 128-224 (GDVVHCWYTG…IFEVELVDID (97 aa)). Ser152 is modified (phosphoserine). At Lys170 the chain carries N6-acetyllysine.

This sequence belongs to the FKBP-type PPIase family.

It is found in the nucleus. It carries out the reaction [protein]-peptidylproline (omega=180) = [protein]-peptidylproline (omega=0). Its activity is regulated as follows. Inhibited preferentially by rapamycin over FK506. FK506- and rapamycin-binding proteins (FKBPs) constitute a family of receptors for the two immunosuppressants which inhibit T-cell proliferation by arresting two distinct cytoplasmic signal transmission pathways. PPIases accelerate the folding of proteins. This is Peptidyl-prolyl cis-trans isomerase FKBP3 (FKBP3) from Oryctolagus cuniculus (Rabbit).